A 70-amino-acid polypeptide reads, in one-letter code: Exodeoxyribonuclease 7 small subunit (70 aa).

The protein belongs to the XseB family. In terms of assembly, heterooligomer composed of large and small subunits.

Its subcellular location is the cytoplasm. It carries out the reaction Exonucleolytic cleavage in either 5'- to 3'- or 3'- to 5'-direction to yield nucleoside 5'-phosphates.. Its function is as follows. Bidirectionally degrades single-stranded DNA into large acid-insoluble oligonucleotides, which are then degraded further into small acid-soluble oligonucleotides. The polypeptide is Exodeoxyribonuclease 7 small subunit (Streptococcus sanguinis (strain SK36)).